We begin with the raw amino-acid sequence, 171 residues long: Acetyltransferase PA2271 (171 aa).

The region spanning 3–162 is the N-acetyltransferase domain; it reads YRIRTSRDED…HEQEIGFAAD (160 aa). CoA-binding positions include 84–86 and 128–130; these read LSI and PFY.

In terms of biological role, catalyzes the transfer of an acetyl group from acetyl coenzyme A (AcCoA) to an acceptor substrate and releases both CoA and the acetylated product. It can use a variety of substrates including spermidine, spermine and N(8)-acetylspermidine, 7-aminocephalosporanic acid, colistin and thiamine. This chain is Acetyltransferase PA2271, found in Pseudomonas aeruginosa (strain ATCC 15692 / DSM 22644 / CIP 104116 / JCM 14847 / LMG 12228 / 1C / PRS 101 / PAO1).